The chain runs to 338 residues: MGLKINRPRRGSMGVYPRKRAADIVPRVRTWPEVNLGKPALLGFAAYKAGMLHAVVVEDRPTSPLYGKEVVRPVTVLDAPPLFIWGFRLYTLDPTNGYRRSIAEVWAPELPAYIRRVLTLPEKADVDKQMKKVEEFKDVAVDVRALVATQPHLSGIGKKTPELLEIPIGGVPSVDERIKFAVSLLGKTVSPKEVFTAGQLVDVIAVTKGKGYQGVIKRFGVTILPRWHKHRKGHRRTGTIGPQAPALMFTQPRPGQMGFHQRTEYNKRVVKIGDNGAEITPKSGFLHYGVIRGPYILIQGTVPGAKKRLVVLRHPARPPKKAPPAAEPQVVWLSSQSI.

Residues His230–Arg253 are disordered.

This sequence belongs to the universal ribosomal protein uL3 family. In terms of assembly, part of the 50S ribosomal subunit. Forms a cluster with proteins L14 and L24e.

In terms of biological role, one of the primary rRNA binding proteins, it binds directly near the 3'-end of the 23S rRNA, where it nucleates assembly of the 50S subunit. The chain is Large ribosomal subunit protein uL3 from Pyrobaculum neutrophilum (strain DSM 2338 / JCM 9278 / NBRC 100436 / V24Sta) (Thermoproteus neutrophilus).